Consider the following 802-residue polypeptide: Ent-copalyl diphosphate synthase, chloroplastic (802 aa).

The N-terminal 60 residues, 1–60 (MSLQYHVLNSIPSTTFLSSTKTTISSSFLTISGSPLNVARDKSRSGSIHCSKLRTQEYIN), are a transit peptide targeting the chloroplast. A substrate-binding site is contributed by Lys245. Mg(2+) is bound by residues Asp377 and Asp379. The short motif at 377–380 (DIDD) is the DXDD motif element. Substrate is bound at residue Lys463.

Belongs to the terpene synthase family. Tpsc subfamily. Requires Mg(2+) as cofactor. The N-terminus is blocked. As to expression, expressed in roots, leaves, flowers and also in siliques.

It localises to the plastid. It is found in the chloroplast. The enzyme catalyses (2E,6E,10E)-geranylgeranyl diphosphate = ent-copalyl diphosphate. It participates in plant hormone biosynthesis; gibberellin biosynthesis. Inhibited by high concentrations of magnesium. Catalyzes the conversion of geranylgeranyl diphosphate to the gibberellin precursor ent-copalyl diphosphate. The chain is Ent-copalyl diphosphate synthase, chloroplastic (GA1) from Arabidopsis thaliana (Mouse-ear cress).